The chain runs to 245 residues: MNPKSNPDTIFSAPIDKIGDFTFDERVAEVFPDMIQRSVPGYSNIISAIGMLAERFVKPHSNVYDLGCSLGAATLSMRRHIKQEGCQIIAVDNSKAMVERCKLHVNAYRSDTPVNVIEADIRNIDIENASVVVLNFTLQFLSPEDRYVLLEKIYAGLRPGGILILSEKYVFEDQVSNELLIDLHHDFKRANGYSELEISQKRSAIENVMRPDSKKQHKERFAQIGFSSYDVWFQCFNFGSMFAIK.

Residues Y42, 67–69, 92–93, 120–121, N135, and R202 each bind S-adenosyl-L-methionine; these read GCS, DN, and DI.

This sequence belongs to the class I-like SAM-binding methyltransferase superfamily. Cx-SAM synthase family. In terms of assembly, homodimer.

The catalysed reaction is prephenate + S-adenosyl-L-methionine = carboxy-S-adenosyl-L-methionine + 3-phenylpyruvate + H2O. Functionally, catalyzes the conversion of S-adenosyl-L-methionine (SAM) to carboxy-S-adenosyl-L-methionine (Cx-SAM). This is Carboxy-S-adenosyl-L-methionine synthase from Vibrio vulnificus (strain YJ016).